Consider the following 430-residue polypeptide: Gamma-glutamyl phosphate reductase (430 aa).

Belongs to the gamma-glutamyl phosphate reductase family.

The protein resides in the cytoplasm. The catalysed reaction is L-glutamate 5-semialdehyde + phosphate + NADP(+) = L-glutamyl 5-phosphate + NADPH + H(+). It participates in amino-acid biosynthesis; L-proline biosynthesis; L-glutamate 5-semialdehyde from L-glutamate: step 2/2. Functionally, catalyzes the NADPH-dependent reduction of L-glutamate 5-phosphate into L-glutamate 5-semialdehyde and phosphate. The product spontaneously undergoes cyclization to form 1-pyrroline-5-carboxylate. The polypeptide is Gamma-glutamyl phosphate reductase (Rhodopseudomonas palustris (strain HaA2)).